Consider the following 650-residue polypeptide: Vitrin (650 aa).

Residues 1–26 form the signal peptide; that stretch reads MGIVVPTMKASVIEVLLVLLVTGIHS. An LCCL domain is found at 40–133; sequence TVPQINCDVK…LSLPRWRESF (94 aa). 2 disulfide bridges follow: Cys-46–Cys-62 and Cys-66–Cys-86. Positions 198–226 are disordered; it reads RSTSKPFAASVTNSPRPQPVGHRSQEMEE. 2 VWFA domains span residues 265-450 and 467-640; these read DLSF…VKRV and DIGF…IQNI. Asn-492 is a glycosylation site (N-linked (GlcNAc...) asparagine).

As to quaternary structure, binds dermatan sulfate and chondroitin sulfate.

The protein localises to the secreted. It localises to the extracellular space. The protein resides in the extracellular matrix. Its function is as follows. Promotes matrix assembly and cell adhesiveness. Plays a role in spinal cord formation by regulating the proliferation and differentiation of neural stem cells. In Mus musculus (Mouse), this protein is Vitrin (Vit).